Reading from the N-terminus, the 230-residue chain is Acyl-protein thioesterase 1 (230 aa).

Catalysis depends on charge relay system residues Ser119, Asp174, and His208. Lys224 carries the post-translational modification N6-acetyllysine.

The protein belongs to the AB hydrolase superfamily. AB hydrolase 2 family. As to quaternary structure, homodimer.

The protein resides in the cytoplasm. It is found in the cell membrane. Its subcellular location is the nucleus membrane. It localises to the endoplasmic reticulum. It carries out the reaction S-hexadecanoyl-L-cysteinyl-[protein] + H2O = L-cysteinyl-[protein] + hexadecanoate + H(+). The catalysed reaction is 1-hexadecanoyl-sn-glycero-3-phosphocholine + H2O = sn-glycerol 3-phosphocholine + hexadecanoate + H(+). The enzyme catalyses a 1-(9Z-octadecenoyl)-2-acyl-sn-glycero-3-phosphocholine + H2O = a 2-acyl-sn-glycero-3-phosphocholine + (9Z)-octadecenoate + H(+). Acts as an acyl-protein thioesterase. Hydrolyzes fatty acids from S-acylated cysteine residues in proteins such as trimeric G alpha proteins or HRAS. Acts as a palmitoyl thioesterase that catalyzes depalmitoylation of proteins, such as ADRB2, KCNMA1 and SQSTM1. Acts as a negative regulator of autophagy by mediating palmitoylation of SQSTM1, decreasing affinity between SQSTM1 and ATG8 proteins and recruitment of ubiquitinated cargo proteins to autophagosomes. Acts as a lysophospholipase and hydrolyzes lysophosphatidylcholine (lyso-PC). Also hydrolyzes lysophosphatidylethanolamine (lyso-PE), lysophosphatidylinositol (lyso-PI) and lysophosphatidylserine (lyso-PS). Has much higher thioesterase activity than lysophospholipase activity. Contributes to the production of lysophosphatidic acid (LPA) during blood coagulation by recognizing and cleaving plasma phospholipids to generate lysophospholipids which in turn act as substrates for ENPP2 to produce LPA. This chain is Acyl-protein thioesterase 1 (LYPLA1), found in Pongo abelii (Sumatran orangutan).